The following is a 375-amino-acid chain: Probable sugar phosphate/phosphate translocator At3g17430 (375 aa).

Helical transmembrane passes span 9–29, 43–63, 76–96, 106–126, 140–160, 163–183, 193–213, 229–249, 257–276, and 280–302; these read LVLT…VILY, LPIT…FLLI, FEIY…SLWF, VAFI…MAVV, MLLV…FNIV, VYQV…QVLL, ITSL…PWYV, WIFF…FLVI, IRVA…TVIF, and TITG…YNYI. A disordered region spans residues 328–348; sequence EKKSSDKFNPNDSVEIPRVGG.

Belongs to the TPT transporter family. TPT (TC 2.A.7.9) subfamily.

Its subcellular location is the membrane. The chain is Probable sugar phosphate/phosphate translocator At3g17430 from Arabidopsis thaliana (Mouse-ear cress).